The primary structure comprises 205 residues: uncharacterized protein (205 aa).

Residues 72-114 (ARVSPYGYESDSENEEYTRISSATSSNVLTDSPTTTQDDPTGR) form a disordered region. Polar residues predominate over residues 90–100 (RISSATSSNVL). Residues 101–110 (TDSPTTTQDD) are compositionally biased toward low complexity.

This is an uncharacterized protein from Equus caballus (Horse).